A 521-amino-acid polypeptide reads, in one-letter code: Membrane-bound transcription factor site-2 protease (521 aa).

Residues M1–P3 are Cytoplasmic-facing. The helical transmembrane segment at V4–L24 threads the bilayer. Residues K25–Q74 lie on the Lumenal side of the membrane. 2 helical membrane-spanning segments follow: residues W75–G95 and K96–A107. Topologically, residues D108 to Q146 are lumenal. The interval Y113–S137 is disordered. A helical membrane pass occupies residues V147–V171. Residue H173 participates in Zn(2+) binding. E174 is an active-site residue. 3 helical membrane passes run G176–F188, N189–L211, and F231–Y253. H177 serves as a coordination point for Zn(2+). Over T254–K448 the chain is Lumenal. An N-linked (GlcNAc...) asparagine glycan is attached at N339. Helical transmembrane passes span Y449 to F466 and A467 to L478. Over D479 to L494 the chain is Lumenal. Residues I495–L515 traverse the membrane as a helical segment. Topologically, residues W516–R521 are cytoplasmic.

It belongs to the peptidase M50A family. It depends on Zn(2+) as a cofactor.

The protein resides in the membrane. Its subcellular location is the cytoplasm. The protein localises to the golgi apparatus membrane. It carries out the reaction Cleaves several transcription factors that are type-2 transmembrane proteins within membrane-spanning domains. Known substrates include sterol regulatory element-binding protein (SREBP) -1, SREBP-2 and forms of the transcriptional activator ATF6. SREBP-2 is cleaved at the site 477-DRSRILL-|-CVLTFLCLSFNPLTSLLQWGGA-505. The residues Asn-Pro, 11 residues distal to the site of cleavage in the membrane-spanning domain, are important for cleavage by S2P endopeptidase. Replacement of either of these residues does not prevent cleavage, but there is no cleavage if both of these residues are replaced.. Functionally, zinc metalloprotease that mediates intramembrane proteolysis of proteins such as ATF6, ATF6B, SREBF1/SREBP1 and SREBF2/SREBP2. Catalyzes the second step in the proteolytic activation of the sterol regulatory element-binding proteins (SREBPs) SREBF1/SREBP1 and SREBF2/SREBP2: cleaves SREBPs within the first transmembrane segment, thereby releasing the N-terminal segment with a portion of the transmembrane segment attached. Mature N-terminal SREBP fragments shuttle to the nucleus and activate gene transcription. Also mediates the second step in the proteolytic activation of the cyclic AMP-dependent transcription factor ATF-6 (ATF6 and ATF6B). Involved in intramembrane proteolysis during bone formation. In astrocytes and osteoblasts, upon DNA damage and ER stress, mediates the second step of the regulated intramembrane proteolytic activation of the transcription factor CREB3L1, leading to the inhibition of cell-cycle progression. The protein is Membrane-bound transcription factor site-2 protease (MBTPS2) of Pongo abelii (Sumatran orangutan).